Here is a 107-residue protein sequence, read N- to C-terminus: Nucleoid-associated protein R00231 (107 aa).

Belongs to the YbaB/EbfC family. Homodimer.

Its subcellular location is the cytoplasm. It localises to the nucleoid. Binds to DNA and alters its conformation. May be involved in regulation of gene expression, nucleoid organization and DNA protection. The protein is Nucleoid-associated protein R00231 of Rhizobium meliloti (strain 1021) (Ensifer meliloti).